A 319-amino-acid chain; its full sequence is HTH-type transcriptional regulator YidZ (319 aa).

In terms of domain architecture, HTH lysR-type spans 8–65; that stretch reads LDLNLLLCLQLLMQERSVTKAAKRMNVTPSAVSKSLAKLRAWFDDPLFVNTPLGLAPT. Residues 25–44 constitute a DNA-binding region (H-T-H motif); the sequence is VTKAAKRMNVTPSAVSKSLA.

This sequence belongs to the LysR transcriptional regulatory family.

Involved in anaerobic NO protection. The chain is HTH-type transcriptional regulator YidZ from Salmonella typhi.